Reading from the N-terminus, the 771-residue chain is DnaJ homolog subfamily C member 16 (771 aa).

The signal sequence occupies residues 1–25 (MELKRLSISWQFLIVLVLILQSLSA). Residues 26-532 (LDFDPYRVLG…ESLLHSNWRE (507 aa)) lie on the Cytoplasmic side of the membrane. Positions 29–93 (DPYRVLGVSR…EKRTNYDHYG (65 aa)) constitute a J domain. A Thioredoxin domain is found at 116-244 (FYFDESFFHF…LRQFVESLLP (129 aa)). Residues 533–553 (MMPLLSLIFSALFILFGTVIV) form a helical; Anchor for type IV membrane protein membrane-spanning segment. Over 554–771 (QAFSDSNEER…FYIPSWPELD (218 aa)) the chain is Extracellular. The tract at residues 559–590 (SNEERESHPPDKEEVPEKAGKTEPSFTKESSS) is disordered. A compositionally biased stretch (basic and acidic residues) spans 560–579 (NEERESHPPDKEEVPEKAGK). N-linked (GlcNAc...) asparagine glycosylation occurs at Asn-628.

It is found in the endoplasmic reticulum membrane. Its function is as follows. Plays an important role in regulating the size of autophagosomes during the formation process. The polypeptide is DnaJ homolog subfamily C member 16 (Dnajc16) (Rattus norvegicus (Rat)).